The following is a 217-amino-acid chain: Non-structural protein NS3 (217 aa).

This sequence belongs to the orbivirus NS3 family.

Functionally, may play a role in the release of virions from infected cells. The chain is Non-structural protein NS3 (Segment-10) from African horse sickness virus (AHSV).